The following is a 201-amino-acid chain: Anthranilate synthase component II (201 aa).

The 194-residue stretch at 3–196 (DILLLDNIDS…LAWAQRKLEP (194 aa)) folds into the Glutamine amidotransferase type-1 domain. 57-59 (GPG) is an L-glutamine binding site. Cys-84 (nucleophile; for GATase activity) is an active-site residue. Residues Gln-88 and 134-135 (SL) contribute to the L-glutamine site. Catalysis depends on for GATase activity residues His-170 and Glu-172.

Tetramer of two components I and two components II.

It catalyses the reaction chorismate + L-glutamine = anthranilate + pyruvate + L-glutamate + H(+). The enzyme catalyses N-(5-phospho-beta-D-ribosyl)anthranilate + diphosphate = 5-phospho-alpha-D-ribose 1-diphosphate + anthranilate. The protein operates within amino-acid biosynthesis; L-tryptophan biosynthesis; L-tryptophan from chorismate: step 1/5. Its pathway is amino-acid biosynthesis; L-tryptophan biosynthesis; L-tryptophan from chorismate: step 2/5. The chain is Anthranilate synthase component II (trpG-TRPD) from Shigella dysenteriae.